The chain runs to 327 residues: Malate dehydrogenase (327 aa).

11–17 is a binding site for NAD(+); it reads GAAGQIS. Positions 92 and 98 each coordinate substrate. Residues asparagine 105, glutamine 112, and 129–131 each bind NAD(+); that span reads VGN. Substrate is bound by residues asparagine 131 and arginine 162. Residue histidine 187 is the Proton acceptor of the active site.

Belongs to the LDH/MDH superfamily. MDH type 2 family.

The enzyme catalyses (S)-malate + NAD(+) = oxaloacetate + NADH + H(+). Catalyzes the reversible oxidation of malate to oxaloacetate. The sequence is that of Malate dehydrogenase from Teredinibacter turnerae (strain ATCC 39867 / T7901).